A 309-amino-acid chain; its full sequence is Foldase protein PrsA 2 (309 aa).

A signal peptide spans 1-20; it reads MKYRLIGVGASLVVAVMLTG. Cys21 carries the N-palmitoyl cysteine lipid modification. Cys21 is lipidated: S-diacylglycerol cysteine. The 96-residue stretch at 137-232 folds into the PpiC domain; it reads MPMTTVQHIA…TADTKDKPTY (96 aa).

Belongs to the PrsA family.

The protein resides in the cell membrane. It carries out the reaction [protein]-peptidylproline (omega=180) = [protein]-peptidylproline (omega=0). Its function is as follows. Plays a major role in protein secretion by helping the post-translocational extracellular folding of several secreted proteins. The sequence is that of Foldase protein PrsA 2 (prsA2) from Lactiplantibacillus plantarum (strain ATCC BAA-793 / NCIMB 8826 / WCFS1) (Lactobacillus plantarum).